We begin with the raw amino-acid sequence, 355 residues long: Poly(3-hydroxyalkanoate) polymerase subunit PhaC (355 aa).

One can recognise an AB hydrolase-1 domain in the interval 68–333; it reads PLLIVYALVN…LAFPGGHIGI (266 aa). The active site involves cysteine 148.

The protein belongs to the PHA/PHB synthase family. Type III PhaC subfamily. Forms a heterodimer with PhaE, which may multimerize in the presence of 3-hydroxybutyryl-CoA.

It localises to the cytoplasm. It catalyses the reaction (3R)-3-hydroxybutanoyl-CoA + [(3R)-hydroxybutanoate](n) = [(3R)-hydroxybutanoate](n+1) + CoA. It functions in the pathway biopolymer metabolism; poly-(R)-3-hydroxybutanoate biosynthesis. In terms of biological role, polymerizes D(-)-3-hydroxybutyryl-CoA to create PHB which consists of thousands of hydroxybutyrate molecules linked end to end. PHB serves as an intracellular energy reserve material when cells grow under conditions of nutrient limitation. The chain is Poly(3-hydroxyalkanoate) polymerase subunit PhaC from Thiocystis violacea.